Consider the following 86-residue polypeptide: Cell division topological specificity factor (86 aa).

It belongs to the MinE family.

In terms of biological role, prevents the cell division inhibition by proteins MinC and MinD at internal division sites while permitting inhibition at polar sites. This ensures cell division at the proper site by restricting the formation of a division septum at the midpoint of the long axis of the cell. The protein is Cell division topological specificity factor of Shewanella pealeana (strain ATCC 700345 / ANG-SQ1).